A 430-amino-acid chain; its full sequence is tRNA(Ile)-lysidine synthase (430 aa).

Position 21 to 26 (21 to 26 (SGGLDS)) interacts with ATP.

This sequence belongs to the tRNA(Ile)-lysidine synthase family.

It localises to the cytoplasm. The catalysed reaction is cytidine(34) in tRNA(Ile2) + L-lysine + ATP = lysidine(34) in tRNA(Ile2) + AMP + diphosphate + H(+). Functionally, ligates lysine onto the cytidine present at position 34 of the AUA codon-specific tRNA(Ile) that contains the anticodon CAU, in an ATP-dependent manner. Cytidine is converted to lysidine, thus changing the amino acid specificity of the tRNA from methionine to isoleucine. The chain is tRNA(Ile)-lysidine synthase from Salmonella typhi.